The chain runs to 571 residues: Double-stranded RNA-binding protein Staufen homolog 2 (571 aa).

Residues 8–75 (TPMCLVNELA…ANKALTESTL (68 aa)) enclose the DRBM 1 domain. Pro-9 and Val-13 each carry phosphoserine. Arg-18 carries the post-translational modification Phosphothreonine. At Ser-21 the chain carries Phosphoserine. 2 disordered regions span residues 71 to 94 (TEST…PGSI) and 178 to 203 (ALQN…DDKD). The span at 83–94 (PKSNVNNNPGSI) shows a compositional bias: polar residues. The DRBM 2 domain occupies 95 to 181 (TPTVELNGLA…AMKALQALQN (87 aa)). Ser-188 is subject to Phosphoserine. Residues 194–203 (SGKEMDDDKD) show a composition bias toward basic and acidic residues. 2 DRBM domains span residues 207-274 (SEIS…ELKK) and 307-375 (NPIS…QLGY). Short sequence motifs (nuclear localization signal) lie at residues 273–317 (KKLP…QIQQ) and 373–412 (LGYK…PKGI). Residues 381 to 571 (LQDQLDKTGE…QDCKKSKSVI (191 aa)) form a required for dendritic transport region. The segment at 382–413 (QDQLDKTGENKGWSGPKPGFPEPANNTPKGIL) is disordered. Phosphoserine occurs at positions 395, 416, 426, 440, 456, and 493. The interval 546 to 571 (LREKADNNQANPGSITQDCKKSKSVI) is disordered. Residues 552-562 (NNQANPGSITQ) show a composition bias toward polar residues.

In terms of assembly, identified in a mRNP complex, at least composed of DHX9, DDX3X, ELAVL1, HNRNPU, IGF2BP1, ILF3, PABPC1, PCBP2, PTBP2, STAU1, STAU2, SYNCRIP and YBX1. Interacts with the exportin XPO5. This requires RNA and RAN bound to GTP. Interacts with microtubules. Isoform 2 and isoform 3 may also interact with ribosomes, and this association is independent of translation. Interacts with TRIM71 (via NHL repeats) in an RNA-dependent manner. As to expression, expressed in both somata and dendrites of hippocampal neurons.

The protein localises to the nucleus. Its subcellular location is the nucleolus. It is found in the cytoplasm. The protein resides in the endoplasmic reticulum. RNA-binding protein required for the microtubule-dependent transport of neuronal RNA from the cell body to the dendrite. As protein synthesis occurs within the dendrite, the localization of specific mRNAs to dendrites may be a prerequisite for neurite outgrowth and plasticity at sites distant from the cell body. This Rattus norvegicus (Rat) protein is Double-stranded RNA-binding protein Staufen homolog 2 (Stau2).